The following is a 373-amino-acid chain: 3 beta-hydroxysteroid dehydrogenase/Delta 5--&gt;4-isomerase type 1 (373 aa).

NADP(+) is bound by residues 10 to 15, Y155, and K159; that span reads GAGGFL. K159 acts as the Proton donor in catalysis. The helical transmembrane segment at 288–308 threads the bilayer; that stretch reads VALLYWLGFLLELVSFLLRPV.

Belongs to the 3-beta-HSD family. High levels in adrenal gland, kidney and male liver. Low levels in female liver.

It localises to the endoplasmic reticulum membrane. Its subcellular location is the mitochondrion membrane. It catalyses the reaction a 3beta-hydroxy-Delta(5)-steroid + NAD(+) = a 3-oxo-Delta(5)-steroid + NADH + H(+). The catalysed reaction is pregnenolone + NAD(+) = pregn-5-ene-3,20-dione + NADH + H(+). It carries out the reaction 3beta-hydroxyandrost-5-en-17-one + NAD(+) = androst-5-ene-3,17-dione + NADH + H(+). The enzyme catalyses androst-5-en-3beta,17beta-diol + NAD(+) = 17beta-hydroxy-androst-5-en-3-one + NADH + H(+). It catalyses the reaction a 3beta-hydroxysteroid + NADP(+) = a 3-oxosteroid + NADPH + H(+). The catalysed reaction is 5alpha-androstane-3beta,17beta-diol + NADP(+) = 17beta-hydroxy-5alpha-androstan-3-one + NADPH + H(+). It carries out the reaction 3beta-hydroxy-5alpha-androstan-17-one + NADP(+) = 5alpha-androstan-3,17-dione + NADPH + H(+). The enzyme catalyses a 3-oxo-Delta(5)-steroid = a 3-oxo-Delta(4)-steroid. It catalyses the reaction pregn-5-ene-3,20-dione = progesterone. The catalysed reaction is androst-5-ene-3,17-dione = androst-4-ene-3,17-dione. It carries out the reaction 17beta-hydroxy-androst-5-en-3-one = testosterone. The enzyme catalyses 5alpha-androstane-3beta,17beta-diol + NAD(+) = 17beta-hydroxy-5alpha-androstan-3-one + NADH + H(+). It functions in the pathway steroid hormone biosynthesis. It participates in steroid metabolism. Functionally, a bifunctional enzyme responsible for the oxidation and isomerization of 3beta-hydroxy-Delta(5)-steroid precursors to 3-oxo-Delta(4)-steroids, an essential step in steroid hormone biosynthesis. Specifically catalyzes the conversion of pregnenolone to progesterone, 17alpha-hydroxypregnenolone to 17alpha-hydroxyprogesterone, dehydroepiandrosterone (DHEA) to 4-androstenedione, and androstenediol to testosterone. Additionally, catalyzes the interconversion between 3beta-hydroxy and 3-oxo-5alpha-androstane steroids controlling the bioavalability of the active forms. Specifically converts dihydrotestosterone to its inactive form 5alpha-androstanediol, that does not bind androgen receptor/AR. Also converts androstanedione, a precursor of testosterone and estrone, to epiandrosterone. Expected to use NAD(+) as preferred electron donor for the 3-beta-hydroxy-steroid dehydrogenase activity and NADPH for the 3-ketosteroid reductase activity. The chain is 3 beta-hydroxysteroid dehydrogenase/Delta 5--&gt;4-isomerase type 1 (HSD3B1) from Mesocricetus auratus (Golden hamster).